Consider the following 499-residue polypeptide: Phenylalanine--tRNA ligase alpha subunit (499 aa).

Residues Thr-330, 372–374 (QVE), and Tyr-412 contribute to the L-phenylalanine site. Glu-414 lines the Mg(2+) pocket. An L-phenylalanine-binding site is contributed by Phe-438.

Belongs to the class-II aminoacyl-tRNA synthetase family. Phe-tRNA synthetase alpha subunit type 2 subfamily. In terms of assembly, tetramer of two alpha and two beta subunits. Mg(2+) serves as cofactor.

It localises to the cytoplasm. It catalyses the reaction tRNA(Phe) + L-phenylalanine + ATP = L-phenylalanyl-tRNA(Phe) + AMP + diphosphate + H(+). In Schizosaccharomyces pombe (strain 972 / ATCC 24843) (Fission yeast), this protein is Phenylalanine--tRNA ligase alpha subunit (frs2).